Reading from the N-terminus, the 363-residue chain is 5-formaminoimidazole-4-carboxamide-1-(beta)-D-ribofuranosyl 5'-monophosphate synthetase (363 aa).

Histidine 29 and serine 96 together coordinate 5-amino-1-(5-phospho-beta-D-ribosyl)imidazole-4-carboxamide. The 237-residue stretch at 118–354 folds into the ATP-grasp domain; that stretch reads RDILRWEAER…ISREIKNAIE (237 aa). Residues 148 to 210 and glutamate 232 contribute to the ATP site; that span reads PEDI…TNFC. Asparagine 260 lines the 5-amino-1-(5-phospho-beta-D-ribosyl)imidazole-4-carboxamide pocket. The Mg(2+) site is built by glutamine 299 and glutamate 312.

This sequence belongs to the phosphohexose mutase family. The cofactor is Mg(2+). Mn(2+) is required as a cofactor.

It carries out the reaction 5-amino-1-(5-phospho-beta-D-ribosyl)imidazole-4-carboxamide + formate + ATP = 5-formamido-1-(5-phospho-D-ribosyl)imidazole-4-carboxamide + ADP + phosphate. Its pathway is purine metabolism; IMP biosynthesis via de novo pathway; 5-formamido-1-(5-phospho-D-ribosyl)imidazole-4-carboxamide from 5-amino-1-(5-phospho-D-ribosyl)imidazole-4-carboxamide (formate route): step 1/1. In terms of biological role, catalyzes the ATP- and formate-dependent formylation of 5-aminoimidazole-4-carboxamide-1-beta-d-ribofuranosyl 5'-monophosphate (AICAR) to 5-formaminoimidazole-4-carboxamide-1-beta-d-ribofuranosyl 5'-monophosphate (FAICAR) in the absence of folates. This chain is 5-formaminoimidazole-4-carboxamide-1-(beta)-D-ribofuranosyl 5'-monophosphate synthetase, found in Methanosphaera stadtmanae (strain ATCC 43021 / DSM 3091 / JCM 11832 / MCB-3).